A 360-amino-acid chain; its full sequence is Peptide chain release factor 1 (360 aa).

Q235 carries the post-translational modification N5-methylglutamine. The tract at residues 286-313 (RQQAEASTRRNLLGSGDRSDRNRTYNFP) is disordered.

The protein belongs to the prokaryotic/mitochondrial release factor family. In terms of processing, methylated by PrmC. Methylation increases the termination efficiency of RF1.

The protein resides in the cytoplasm. In terms of biological role, peptide chain release factor 1 directs the termination of translation in response to the peptide chain termination codons UAG and UAA. This Cronobacter sakazakii (strain ATCC BAA-894) (Enterobacter sakazakii) protein is Peptide chain release factor 1.